We begin with the raw amino-acid sequence, 156 residues long: Myosin, essential light chain, adductor muscle (156 aa).

2 consecutive EF-hand domains span residues 6–43 (DEID…LGIN) and 81–116 (GTFA…LGER).

In molluscan muscle, calcium regulation is associated with myosin rather than with actin. Muscle myosin contains two types of light chains: the catalytic light chain, essential for ATPase activity, and the regulatory light chain, a calcium-binding protein responsible for Ca(2+) dependent binding and Ca(2+) dependent Mg-ATPase activity. The chain is Myosin, essential light chain, adductor muscle from Mizuhopecten yessoensis (Japanese scallop).